The following is a 484-amino-acid chain: AVTPGSIPNFPFRDCNTTNGAYRLAPVWRPSGSNTYCFKIQVSQDALSCTGACCSADLHKIEFNVCSSCLVAGASVDATVNGVRTRVGATLDKAPAGPVGSAVLRLTQLGLDTTTAQDAEVCLTLKTNRGGQGCTTLDQLCSSPGFPAGTCTAAMFDVACDCCPVSQAGQALPPPPPVIPPVLRPCDVCIAATIVPPANDVRPYRYDSATCAAIQQNIANAMNSLLGGANINVFSPFAPNASQCFDTQIITCGRFNGSDTDALANLTEAVQQQLSAFIGVASGGNVCNPKLEKYTVTVSTINNVADQCLDLSQSASCFLPGVPFPNCTCNTTQGVMPFTVSPTWYAQPANVRWGRNVTEYCFTVNTLQPSQVVPSTCYNANDALAKIEWYASDAFRSAVKGFTVYPAGGSNKTIADSWGATGTDTLKVNLNWNLLQANGGKVCVAIQNPFTMGDICKGALGQCYASIFNRDNSDYCCPIYRTGP.

N-linked (GlcNAc...) asparagine glycans are attached at residues N16, N240, N256, N265, N326, N330, N356, and N411.

Its subcellular location is the secreted. The protein resides in the extracellular space. The protein localises to the extracellular matrix. Functionally, may be involved in conversion of asexual males and females to the sexual pathway. The chain is Perphorin-2 from Volvox carteri (Green alga).